Consider the following 157-residue polypeptide: UPF0179 protein Mhun_1135 (157 aa).

It belongs to the UPF0179 family.

The chain is UPF0179 protein Mhun_1135 from Methanospirillum hungatei JF-1 (strain ATCC 27890 / DSM 864 / NBRC 100397 / JF-1).